The following is a 418-amino-acid chain: CinA-like protein (418 aa).

This sequence belongs to the CinA family.

The chain is CinA-like protein from Leptospira interrogans serogroup Icterohaemorrhagiae serovar copenhageni (strain Fiocruz L1-130).